A 606-amino-acid chain; its full sequence is Replication protein E1 (606 aa).

The short motif at 76 to 78 (KRK) is the Nuclear localization signal element. A phosphoserine; by host mark is found at Ser-81 and Ser-89. The segment at 144–307 (GTGDVDIDYL…TVLGHQNAEA (164 aa)) is DNA-binding region. The 151-residue stretch at 406 to 556 (VNFIMFLAAL…FPMKSDNTPQ (151 aa)) folds into the SF3 helicase domain. 432 to 439 (GPPNSGKS) lines the ATP pocket. Residue Lys-513 forms a Glycyl lysine isopeptide (Lys-Gly) (interchain with G-Cter in SUMO) linkage. A disordered region spans residues 581 to 606 (EEEEEGEHGETQRAFQCSARSANEHI). Positions 593–606 (RAFQCSARSANEHI) are enriched in polar residues.

This sequence belongs to the papillomaviridae E1 protein family. As to quaternary structure, can form hexamers. Interacts with E2 protein; this interaction increases E1 DNA binding specificity. Interacts with host DNA polymerase subunit POLA2. Interacts with host single stranded DNA-binding protein RPA1. Interacts with host TOP1; this interaction stimulates the enzymatic activity of TOP1. Phosphorylated. Post-translationally, sumoylated.

It localises to the host nucleus. The enzyme catalyses Couples ATP hydrolysis with the unwinding of duplex DNA by translocating in the 3'-5' direction.. It catalyses the reaction ATP + H2O = ADP + phosphate + H(+). Its function is as follows. ATP-dependent DNA 3'-5' helicase required for initiation of viral DNA replication. It forms a complex with the viral E2 protein. The E1-E2 complex binds to the replication origin which contains binding sites for both proteins. During the initial step, a dimer of E1 interacts with a dimer of protein E2 leading to a complex that binds the viral origin of replication with high specificity. Then, a second dimer of E1 displaces the E2 dimer in an ATP-dependent manner to form the E1 tetramer. Following this, two E1 monomers are added to each half of the site, which results in the formation of two E1 trimers on the viral ori. Subsequently, two hexamers will be created. The double hexamer acts as a bi-directional helicase machinery and unwinds the viral DNA and then recruits the host DNA polymerase to start replication. In Human papillomavirus type RTRX7, this protein is Replication protein E1.